A 258-amino-acid chain; its full sequence is MVTNFNGILLFRRDYRERDMLIKFLTAEYGKKMFFIRGARRRGFKMAAELLPFTMGEYVGDLRDQGLSYINSVKSVQYLEHISQDIALNAYATYVMNLMDVAFPDNQPVGRWYQQLTSALQLIDQDVAPALVANVVEIQLLQPFGVAPELRWCTVCGRSDLPLDYSESYGGLLCQQHWHLDPHRLHASPAAIFYLRQFSVLDLAKVHSIKVKPRTAAELRRILDEIYQNSVGVRLKSKRFIDQMGSWYQPLAPRKNED.

Belongs to the RecO family.

Functionally, involved in DNA repair and RecF pathway recombination. The sequence is that of DNA repair protein RecO from Lactiplantibacillus plantarum (strain ATCC BAA-793 / NCIMB 8826 / WCFS1) (Lactobacillus plantarum).